Consider the following 402-residue polypeptide: Glutamate N-acetyltransferase (402 aa).

Residues Thr151, Lys178, Thr189, Glu267, Asn397, and Thr402 each contribute to the substrate site. Residue Thr189 is the Nucleophile of the active site.

This sequence belongs to the ArgJ family. In terms of assembly, heterotetramer of two alpha and two beta chains.

The protein resides in the cytoplasm. It catalyses the reaction N(2)-acetyl-L-ornithine + L-glutamate = N-acetyl-L-glutamate + L-ornithine. It functions in the pathway amino-acid biosynthesis; L-arginine biosynthesis; L-ornithine and N-acetyl-L-glutamate from L-glutamate and N(2)-acetyl-L-ornithine (cyclic): step 1/1. Catalyzes the transfer of the acetyl group from N(2)-acetylornithine to glutamate, forming N-acetylglutamate and L-ornithine. This is Glutamate N-acetyltransferase from Methanothermobacter thermautotrophicus (strain ATCC 29096 / DSM 1053 / JCM 10044 / NBRC 100330 / Delta H) (Methanobacterium thermoautotrophicum).